We begin with the raw amino-acid sequence, 297 residues long: MATH domain and coiled-coil domain-containing protein At2g05420 (297 aa).

Residues 7–139 (SKTITWVIEN…NGELTLVAKV (133 aa)) form the MATH domain. A coiled-coil region spans residues 239-281 (KLDWLEKKHGEIKEKKKKEEASLKRLQEMEKQIFNEAQIYKEK).

The chain is MATH domain and coiled-coil domain-containing protein At2g05420 from Arabidopsis thaliana (Mouse-ear cress).